Reading from the N-terminus, the 137-residue chain is Large ribosomal subunit protein uL16 (137 aa).

The protein belongs to the universal ribosomal protein uL16 family. In terms of assembly, part of the 50S ribosomal subunit.

In terms of biological role, binds 23S rRNA and is also seen to make contacts with the A and possibly P site tRNAs. The sequence is that of Large ribosomal subunit protein uL16 from Sorangium cellulosum (strain So ce56) (Polyangium cellulosum (strain So ce56)).